We begin with the raw amino-acid sequence, 241 residues long: Homeobox protein TGIF2LX (241 aa).

Disordered stretches follow at residues 1–58 (MEAA…GNLP) and 127–207 (GKGA…ELVS). Over residues 10 to 39 (ETQSPVQKDSPAKTQSPAQDTSIMSRNNAD) the composition is skewed to polar residues. A DNA-binding region (homeobox; TALE-type) is located at residues 48–111 (EHKKKRKGNL…INARRRILPD (64 aa)).

The protein belongs to the TALE/TGIF homeobox family.

It localises to the nucleus. In terms of biological role, may have a transcription role in testis. This is Homeobox protein TGIF2LX (TGIF2LX) from Pan paniscus (Pygmy chimpanzee).